The primary structure comprises 301 residues: GTPase Era (301 aa).

The region spanning 4 to 173 is the Era-type G domain; that stretch reads KAGFVALIGK…LECISKHLNP (170 aa). The segment at 12-19 is G1; sequence GKPNAGKS. A GTP-binding site is contributed by 12–19; the sequence is GKPNAGKS. A G2 region spans residues 38 to 42; that stretch reads NATRK. The G3 stretch occupies residues 64–67; the sequence is DTPG. GTP contacts are provided by residues 64–68 and 122–125; these read DTPGL and SKID. Residues 122–125 are G4; that stretch reads SKID. The segment at 152 to 154 is G5; it reads LSA. Positions 204–280 constitute a KH type-2 domain; that stretch reads LSDEIPYESD…FLNLQVIAQK (77 aa).

The protein belongs to the TRAFAC class TrmE-Era-EngA-EngB-Septin-like GTPase superfamily. Era GTPase family. In terms of assembly, monomer.

It localises to the cytoplasm. Its subcellular location is the cell inner membrane. In terms of biological role, an essential GTPase that binds both GDP and GTP, with rapid nucleotide exchange. Plays a role in 16S rRNA processing and 30S ribosomal subunit biogenesis and possibly also in cell cycle regulation and energy metabolism. This Helicobacter pylori (strain P12) protein is GTPase Era.